Reading from the N-terminus, the 107-residue chain is Transcriptional regulator Rv3488 (107 aa).

Residues H16, E30, H34, and H101 each coordinate Cd(2+).

In terms of assembly, homodimer.

Functionally, may have transcription regulation and metal-detoxifying functions through which it may enhance intracellular survival of mycobacteria. Binds to its own promoter region and to the Rv1999c promoter region. It displays strong affinity for cadmium ions, but can also bind zinc, manganese and nickel. Expression increases the intracellular survival of recombinant M.smegmatis in murine macrophage cell line and increases its tolerance to cadmium ions. The protein is Transcriptional regulator Rv3488 of Mycobacterium tuberculosis (strain ATCC 25618 / H37Rv).